We begin with the raw amino-acid sequence, 189 residues long: MAKSQNKESPELRTPNRFITDHDASGLSVFNTSIPDALPAQVIGGRDRFHLAYATTTSPVDLTNQSDIVTYSSFLSTPPGIFLPGGSVLRIVDVRPGGESLMHRTESIDYGVVLDGEIDLVLDSGESRILKRGDVAVQRGTNHLWRNRSHTAWGRMVFVTLEAKPIEIDGKLLGGVTGLGMDDTSPAGN.

Belongs to the oryJ family.

Functionally, part of the gene cluster that mediates the biosynthesis of the phomopsins, a group of hexapeptide mycotoxins which infects lupins and causes lupinosis disease in livestock. The role of phomC within the phomopsins biosynthesis pathway has still to be determined. The pathway starts with the processing of the precursor phomA by several endopeptidases including kexin proteases as well as the cluster-specific S41 family peptidase phomP1 and the oligopeptidase phomG to produce 10 identical copies of the hexapeptide Tyr-Val-Ile-Pro-Ile-Asp. After being excised from the precursor peptide, the core peptides are cyclized and modified post-translationally by enzymes encoded within the gene cluster. The timing and order of proteolysis of the phomA precursor and PTMs are still unknown. Two tyrosinase-like enzymes, phomQ1 and phomQ2, catalyze the chlorination and hydroxylation of Tyr, respectively. PhomYb, is proposed to be involved in the construction of the macrocyclic structure. The other 4 ustYa family proteins may be involved in PTMs that generate the unique structure of phomopsin A. PhomYa is required for the hydroxylation of C-beta of Tyr. PhomYc, phomYd, and phomYe are responsible for the biosynthesis of 2,3-dehydroisoleucine (dIle), 2,3-dehydroaspartic acid (dAsp), and 3,4-dehydroproline (dPro), respectively. While dIle formation by phomYc is indispensable for the installation of dAsp by phomYd, the order of the other PTMs have not been elucidated yet. Most of the biosynthetic enzymes likely have broad substrate specificity, and thus, there might be a metabolic grid from a precursor to phomopsin A. The enzyme(s) responsible for the biosynthesis of 3,4-dehydrovaline (dVal) have also not been identified yet. Finally, phomM acts as an S-adenosylmethionine-dependent alpha-N-methyltransferase that catalyzes two successive N-methylation reactions, converting N-desmethyl-phomopsin A to phomopsin A and phomopsin A further to an N,N-dimethylated congener called phomopsin E. This is Phomopsin biosynthesis cluster protein D from Diaporthe leptostromiformis (Lupinosis disease fungus).